A 494-amino-acid polypeptide reads, in one-letter code: Transcriptional regulator calD (494 aa).

The protein localises to the nucleus. In terms of biological role, transcription co-regulator that might be involved in the regulation of the expression of the gene cluster that mediates the biosynthesis of calbistrins and related compounds such as decumbenones. Calbistrin A is a secondary metabolite with an interesting structure that was recently found to have bioactivity against leukemia cells. It consists of two polyketides linked by an ester bond: a bicyclic decalin containing polyketide and a linear 12 carbon dioic acid structure. This Penicillium decumbens protein is Transcriptional regulator calD.